The following is a 399-amino-acid chain: Glutathione S-transferase LANCL1 (399 aa).

At Ala-2 the chain carries N-acetylalanine. Lys-142 is modified (N6-acetyllysine). Cys-276 provides a ligand contact to Zn(2+). Lys-317 serves as a coordination point for glutathione. The Zn(2+) site is built by Cys-322 and His-323. 364–367 (RTPD) is a glutathione binding site.

The protein belongs to the LanC-like protein family. Interacts with the C-terminal of STOM. Interacts with the EPS8 SH3 domain. Interaction with EPS8 is inhibited by glutathione binding. As to expression, expressed in brain.

It localises to the cytoplasm. It is found in the cell membrane. It catalyses the reaction RX + glutathione = an S-substituted glutathione + a halide anion + H(+). It carries out the reaction 1-chloro-2,4-dinitrobenzene + glutathione = 2,4-dinitrophenyl-S-glutathione + chloride + H(+). Functionally, functions as a glutathione transferase. Catalyzes conjugation of the glutathione (GSH) to artificial substrates 1-chloro-2,4-dinitrobenzene (CDNB) and p-nitrophenyl acetate. Mitigates neuronal oxidative stress during normal postnatal development and in response to oxidative stresses probably through GSH antioxidant defense mechanism. May play a role in EPS8 signaling. Binds glutathione. The chain is Glutathione S-transferase LANCL1 (LANCL1) from Bos taurus (Bovine).